The chain runs to 395 residues: Neuromedin-U receptor 2 (395 aa).

Topologically, residues 1-41 are extracellular; the sequence is MGKLENASWIHDPLMKYLNSTEEYLAHLCGPKRSDLSLPVS. N-linked (GlcNAc...) asparagine glycosylation is found at N6 and N19. The chain crosses the membrane as a helical span at residues 42–62; the sequence is VAYALIFLVGVMGNLLVCMVI. Residues 63–74 are Cytoplasmic-facing; the sequence is VRHQTLKTPTNY. Residues 75 to 95 form a helical membrane-spanning segment; it reads YLFSLAVSDLLVLLLGMPLEI. Residues 96–115 are Extracellular-facing; the sequence is YEMWHNYPFLFGPVGCYFKT. A disulfide bond links C111 and C196. Residues 116–138 form a helical membrane-spanning segment; the sequence is ALFETVCFASILSVTTVSVERYV. The Cytoplasmic segment spans residues 139–157; that stretch reads AIVHPFRAKLESTRRRALR. The helical transmembrane segment at 158–178 threads the bilayer; that stretch reads ILSLVWSFSVVFSLPNTSIHG. The Extracellular segment spans residues 179–212; it reads IKFQHFPNGSSVPGSATCTVTKPMWVYNLIIQAT. The N-linked (GlcNAc...) asparagine glycan is linked to N186. A helical transmembrane segment spans residues 213-233; sequence SFLFYILPMTLISVLYYLMGL. Residues 234-257 are Cytoplasmic-facing; it reads RLKRDESLEANKVAVNIHRPSRKS. A helical transmembrane segment spans residues 258–278; it reads VTKMLFVLVLVFAICWTPFHV. Residues 279–293 are Extracellular-facing; sequence DRLFFSFVEEWTESL. Residues 294–314 form a helical membrane-spanning segment; the sequence is AAVFNLIHVVSGVFFYLSSAV. Residues 315–395 are Cytoplasmic-facing; sequence NPIIYNLLSR…TTAPCAGEVP (81 aa). Residues 374-395 form a disordered region; sequence FPGQSSIHNTNLTTAPCAGEVP. Residues 375 to 387 show a composition bias toward polar residues; it reads PGQSSIHNTNLTT.

The protein belongs to the G-protein coupled receptor 1 family. In terms of tissue distribution, the highest level is detected in the uterus. In the central nervous system, high expression levels were found in the hypothalamus and moderate levels in both the medulla oblongata and spinal cord. Expressed in the hypothalamic paraventricular nucleus (PVN) and suprachiasmatic nuclei (SCN) of the hypothalamus. Expression is low in the gastrointestinal tract. In other peripheral tissues, moderate expression was observed in the lung and ovary.

It is found in the cell membrane. In terms of biological role, receptor for the neuromedin-U and neuromedin-S neuropeptides. This chain is Neuromedin-U receptor 2 (Nmur2), found in Rattus norvegicus (Rat).